Here is a 191-residue protein sequence, read N- to C-terminus: Transcription factor FapR (191 aa).

The MaoC-like domain occupies 102 to 169; it reads GIARGHHLFA…RILVTSHVNQ (68 aa).

The protein belongs to the FapR family.

In terms of biological role, transcriptional factor involved in regulation of membrane lipid biosynthesis by repressing genes involved in fatty acid and phospholipid metabolism. In Shouchella clausii (strain KSM-K16) (Alkalihalobacillus clausii), this protein is Transcription factor FapR.